The chain runs to 676 residues: LIM domain-containing protein 1 (676 aa).

The tract at residues 54–134 (KIHLQQQQQQ…PPYPPQEQRS (81 aa)) is mediates nuclear export. 2 disordered regions span residues 104-163 (KPPL…SAFH) and 189-389 (KWGD…TSLV). S145 carries the phosphoserine modification. Positions 186–260 (ASPKWGDKPG…IGGRSSEKPT (75 aa)) are interaction with EGLN1/PHD2. Low complexity-rich tracts occupy residues 201 to 213 (GLSVGSGWPSSPG) and 232 to 242 (LSLSSSRSSEG). 2 positions are modified to phosphoserine: S233 and S239. A compositionally biased stretch (gly residues) spans 243-253 (SLGGQNSGIGG). Positions 262-271 (LWSTASSQRV) are enriched in polar residues. 4 positions are modified to phosphoserine: S272, S277, S304, and S316. Residues 343 to 360 (SYLSSSAPSSSPAGLDGS) are compositionally biased toward low complexity. The tract at residues 404-442 (GPLGWSSDGSLGSVLLDSPSSPRVRLPCQPLVPGPELRP) is interaction with RB1. Phosphoserine occurs at positions 421 and 424. LIM zinc-binding domains lie at 470–531 (GACV…SGFQ), 535–595 (DRCF…VLAP), and 595–664 (PKCA…RLEK). Positions 472 to 676 (CVKCSKGVFG…SSTALHQHHF (205 aa)) are necessary for nuclear localization.

It belongs to the zyxin/ajuba family. Interacts (via LIM domains) with TRAF6. Found in a complex with TRAF6, PRKCZ and SQSTM1. Interacts (via LIM domains) SNAI2/SLUG (via SNAG domain) and SCRT1 (via SNAG domain). Interacts with SQSTM1 and RB1. Found in a complex composed of LIMD1, VHL, EGLN1/PHD2, ELOB and CUL2. Interacts with EIF4E, AGO1, AGO2, DCP2, DDX6, LATS1, LATS2, EGLN1/PHD2, EGLN2/PHD1 and EGLN3/PHD3. Interacts (via LIM zinc-binding 2) with isoform 1 and isoform 3 of VHL. Interacts (via LIM domains) with SNAI1 (via SNAG domain). In terms of processing, phosphorylated during mitosis. As to expression, expressed in normal and breast cancer tissues (at protein level). Ubiquitous.

The protein resides in the cytoplasm. It is found in the nucleus. The protein localises to the P-body. It localises to the cell junction. Its subcellular location is the adherens junction. The protein resides in the focal adhesion. In terms of biological role, adapter or scaffold protein which participates in the assembly of numerous protein complexes and is involved in several cellular processes such as cell fate determination, cytoskeletal organization, repression of gene transcription, cell-cell adhesion, cell differentiation, proliferation and migration. Positively regulates microRNA (miRNA)-mediated gene silencing and is essential for P-body formation and integrity. Acts as a hypoxic regulator by bridging an association between the prolyl hydroxylases and VHL enabling efficient degradation of HIF1A. Acts as a transcriptional corepressor for SNAI1- and SNAI2/SLUG-dependent repression of E-cadherin transcription. Negatively regulates the Hippo signaling pathway and antagonizes phosphorylation of YAP1. Inhibits E2F-mediated transcription, and suppresses the expression of the majority of genes with E2F1-responsive elements. Regulates osteoblast development, function, differentiation and stress osteoclastogenesis. Enhances the ability of TRAF6 to activate adapter protein complex 1 (AP-1) and negatively regulates the canonical Wnt receptor signaling pathway in osteoblasts. May act as a tumor suppressor by inhibiting cell proliferation. This chain is LIM domain-containing protein 1 (LIMD1), found in Homo sapiens (Human).